A 268-amino-acid polypeptide reads, in one-letter code: MLNNYNSLAQPMWQNGPAPGEFYNFTGGQTPVQQLPRELTTMGPYGTKHSTASSTTGTSVLGIRYDSGVMLAADTLVSYGSMARYQNIERVFKVNKNILLGGSGDFADIQSIKRNIDQKMIEDQCCDDNIEMKPKSLASWMTRVLYNRRSRMNPLYIDVVVGGVDNEGTPYLANVDLRGRSYEDYVVATGFARHLAVPLVREKKPKDRDFTAVEASELIRTCMEVLYYRDTRNISQYTVGVCSVNGCGVEGPFQVNENWTFAETIKGY.

Belongs to the peptidase T1B family. The 26S proteasome consists of a 20S proteasome core and two 19S regulatory subunits. The 20S proteasome core is composed of 28 subunits that are arranged in four stacked rings, resulting in a barrel-shaped structure. The two end rings are each formed by seven alpha subunits, and the two central rings are each formed by seven beta subunits. The catalytic chamber with the active sites is on the inside of the barrel.

It localises to the cytoplasm. The protein resides in the nucleus. Non-catalytic component of the proteasome, a multicatalytic proteinase complex which is characterized by its ability to cleave peptides with Arg, Phe, Tyr, Leu, and Glu adjacent to the leaving group at neutral or slightly basic pH. The proteasome has an ATP-dependent proteolytic activity. This is Proteasome subunit beta type-4 (Prosbeta7) from Drosophila melanogaster (Fruit fly).